The chain runs to 525 residues: GMP synthase [glutamine-hydrolyzing] (525 aa).

Residues 8–207 (KILILDFGSQ…VMDICGCDNK (200 aa)) enclose the Glutamine amidotransferase type-1 domain. C85 functions as the Nucleophile in the catalytic mechanism. Catalysis depends on residues H181 and E183. Residues 208-400 (WQPASIIEDA…LGLPYDMLYR (193 aa)) enclose the GMPS ATP-PPase domain. 235–241 (SGGVDSS) is an ATP binding site.

Homodimer.

It carries out the reaction XMP + L-glutamine + ATP + H2O = GMP + L-glutamate + AMP + diphosphate + 2 H(+). It participates in purine metabolism; GMP biosynthesis; GMP from XMP (L-Gln route): step 1/1. In terms of biological role, catalyzes the synthesis of GMP from XMP. The polypeptide is GMP synthase [glutamine-hydrolyzing] (Shewanella amazonensis (strain ATCC BAA-1098 / SB2B)).